Consider the following 809-residue polypeptide: Hydrazine synthase subunit alpha (809 aa).

The signal sequence occupies residues 1–27; it reads MGKRKLGVIASAFVAGALVCGSTLVNA. Cysteine 303 serves as a coordination point for Zn(2+). Heme-binding residues include cysteine 583 and cysteine 586. Histidine 587 provides a ligand contact to Zn(2+). Residues tyrosine 591, cysteine 685, cysteine 688, histidine 689, and histidine 772 each contribute to the heme site. The Cytochrome c domain occupies 633 to 792; it reads KGVKHGEDVV…AIVEWIDLGA (160 aa).

As to quaternary structure, part of the hydrazine synthase complex that forms an elongated dimer of heterotrimers composed of one alpha, one beta and one gamma subunit. Heme c serves as cofactor.

The protein resides in the anammoxosome. The enzyme catalyses hydrazine + 3 Fe(III)-[cytochrome c] + H2O = nitric oxide + 3 Fe(II)-[cytochrome c] + NH4(+) + 2 H(+). It participates in nitrogen metabolism. In terms of biological role, component of the hydrazine synthase complex that catalyzes the condensation of nitric oxide (NO) with ammonium to form hydrazine. The alpha subunit catalyzes the second half-reaction, i.e. the condensation of hydroxylamine formed in the active site of the gamma subunit with ammonia, yielding hydrazine. Is involved in anaerobic ammonium oxidation (anammox), a biological process in which nitrite is used as the electron acceptor in the conversion of ammonium to dinitrogen gas (N2) and water; this bacterial process has a major role in the Earth's nitrogen cycle and has been estimated to synthesize up to 50% of the dinitrogen gas emitted into our atmosphere from the oceans. This is Hydrazine synthase subunit alpha from Kuenenia stuttgartiensis.